A 264-amino-acid chain; its full sequence is Type III pantothenate kinase (264 aa).

Residue 6 to 13 participates in ATP binding; it reads DVRNTSIE. Substrate is bound at residue 109 to 112; sequence GADR. The active-site Proton acceptor is the aspartate 111. Residue aspartate 131 coordinates K(+). Threonine 134 is a binding site for ATP. Threonine 185 is a substrate binding site.

This sequence belongs to the type III pantothenate kinase family. In terms of assembly, homodimer. NH4(+) serves as cofactor. K(+) is required as a cofactor.

It localises to the cytoplasm. It catalyses the reaction (R)-pantothenate + ATP = (R)-4'-phosphopantothenate + ADP + H(+). It functions in the pathway cofactor biosynthesis; coenzyme A biosynthesis; CoA from (R)-pantothenate: step 1/5. Its function is as follows. Catalyzes the phosphorylation of pantothenate (Pan), the first step in CoA biosynthesis. The sequence is that of Type III pantothenate kinase from Nocardia farcinica (strain IFM 10152).